Consider the following 572-residue polypeptide: Proline--tRNA ligase (572 aa).

Belongs to the class-II aminoacyl-tRNA synthetase family. ProS type 1 subfamily. Homodimer.

It is found in the cytoplasm. The catalysed reaction is tRNA(Pro) + L-proline + ATP = L-prolyl-tRNA(Pro) + AMP + diphosphate. Catalyzes the attachment of proline to tRNA(Pro) in a two-step reaction: proline is first activated by ATP to form Pro-AMP and then transferred to the acceptor end of tRNA(Pro). As ProRS can inadvertently accommodate and process non-cognate amino acids such as alanine and cysteine, to avoid such errors it has two additional distinct editing activities against alanine. One activity is designated as 'pretransfer' editing and involves the tRNA(Pro)-independent hydrolysis of activated Ala-AMP. The other activity is designated 'posttransfer' editing and involves deacylation of mischarged Ala-tRNA(Pro). The misacylated Cys-tRNA(Pro) is not edited by ProRS. This Pectobacterium atrosepticum (strain SCRI 1043 / ATCC BAA-672) (Erwinia carotovora subsp. atroseptica) protein is Proline--tRNA ligase.